The primary structure comprises 486 residues: Aspartyl/glutamyl-tRNA(Asn/Gln) amidotransferase subunit B (486 aa).

This sequence belongs to the GatB/GatE family. GatB subfamily. As to quaternary structure, heterotrimer of A, B and C subunits.

The catalysed reaction is L-glutamyl-tRNA(Gln) + L-glutamine + ATP + H2O = L-glutaminyl-tRNA(Gln) + L-glutamate + ADP + phosphate + H(+). It catalyses the reaction L-aspartyl-tRNA(Asn) + L-glutamine + ATP + H2O = L-asparaginyl-tRNA(Asn) + L-glutamate + ADP + phosphate + 2 H(+). Its function is as follows. Allows the formation of correctly charged Asn-tRNA(Asn) or Gln-tRNA(Gln) through the transamidation of misacylated Asp-tRNA(Asn) or Glu-tRNA(Gln) in organisms which lack either or both of asparaginyl-tRNA or glutaminyl-tRNA synthetases. The reaction takes place in the presence of glutamine and ATP through an activated phospho-Asp-tRNA(Asn) or phospho-Glu-tRNA(Gln). The polypeptide is Aspartyl/glutamyl-tRNA(Asn/Gln) amidotransferase subunit B (Leptospira borgpetersenii serovar Hardjo-bovis (strain L550)).